Here is a 449-residue protein sequence, read N- to C-terminus: Glucose-6-phosphate isomerase (449 aa).

E291 (proton donor) is an active-site residue. Active-site residues include H312 and K426.

It belongs to the GPI family.

It localises to the cytoplasm. It carries out the reaction alpha-D-glucose 6-phosphate = beta-D-fructose 6-phosphate. It functions in the pathway carbohydrate biosynthesis; gluconeogenesis. It participates in carbohydrate degradation; glycolysis; D-glyceraldehyde 3-phosphate and glycerone phosphate from D-glucose: step 2/4. In terms of biological role, catalyzes the reversible isomerization of glucose-6-phosphate to fructose-6-phosphate. This is Glucose-6-phosphate isomerase from Streptococcus pyogenes serotype M6 (strain ATCC BAA-946 / MGAS10394).